Here is a 509-residue protein sequence, read N- to C-terminus: Bifunctional purine biosynthesis protein PurH (509 aa).

One can recognise an MGS-like domain in the interval M1–V144.

Belongs to the PurH family.

It catalyses the reaction (6R)-10-formyltetrahydrofolate + 5-amino-1-(5-phospho-beta-D-ribosyl)imidazole-4-carboxamide = 5-formamido-1-(5-phospho-D-ribosyl)imidazole-4-carboxamide + (6S)-5,6,7,8-tetrahydrofolate. The enzyme catalyses IMP + H2O = 5-formamido-1-(5-phospho-D-ribosyl)imidazole-4-carboxamide. The protein operates within purine metabolism; IMP biosynthesis via de novo pathway; 5-formamido-1-(5-phospho-D-ribosyl)imidazole-4-carboxamide from 5-amino-1-(5-phospho-D-ribosyl)imidazole-4-carboxamide (10-formyl THF route): step 1/1. It functions in the pathway purine metabolism; IMP biosynthesis via de novo pathway; IMP from 5-formamido-1-(5-phospho-D-ribosyl)imidazole-4-carboxamide: step 1/1. This Listeria monocytogenes serotype 4b (strain F2365) protein is Bifunctional purine biosynthesis protein PurH.